The primary structure comprises 324 residues: tRNA pseudouridine synthase B (324 aa).

Position 43 (H43) interacts with substrate. D48 functions as the Nucleophile in the catalytic mechanism. Residues Y76, Y179, and L200 each contribute to the substrate site.

This sequence belongs to the pseudouridine synthase TruB family. Type 1 subfamily.

It carries out the reaction uridine(55) in tRNA = pseudouridine(55) in tRNA. Functionally, responsible for synthesis of pseudouridine from uracil-55 in the psi GC loop of transfer RNAs. The polypeptide is tRNA pseudouridine synthase B (Yersinia pestis bv. Antiqua (strain Nepal516)).